Here is a 478-residue protein sequence, read N- to C-terminus: Nuclear distribution protein PAC1 (478 aa).

The 33-residue stretch at 9–41 (QAEELHKAMIAYLLSANLPKSAAALREELADSV) folds into the LisH domain. The stretch at 60–87 (TSVVRLQKKIMDLESRNNALQSELDSAT) forms a coiled coil. WD repeat units follow at residues 113–154 (SHRE…RTIK), 156–196 (HTKA…KNIR), 200–247 (GHDH…CVKT), 250–289 (GHVD…TKST), 292–352 (GHEH…IKTL), 354–393 (GHDN…KCVR), 398–439 (AHGH…AASA), and 440–477 (INGV…RVFA).

Belongs to the WD repeat LIS1/nudF family. In terms of assembly, self-associates. Interacts with NDL1 and dynein.

It is found in the cytoplasm. The protein resides in the cytoskeleton. Its subcellular location is the spindle pole. Its function is as follows. Positively regulates the activity of the minus-end directed microtubule motor protein dynein. May enhance dynein-mediated microtubule sliding by targeting dynein to the microtubule plus end. Required for nuclear migration during vegetative growth as well as development. Required for retrograde early endosome (EE) transport from the hyphal tip. Required for localization of dynein to the mitotic spindle poles. Recruits additional proteins to the dynein complex at SPBs. The sequence is that of Nuclear distribution protein PAC1 from Paracoccidioides brasiliensis (strain Pb18).